The following is a 790-amino-acid chain: Spermatogenesis-associated protein 20 (790 aa).

Residues Met-1 to Gly-19 show a composition bias toward basic residues. Positions Met-1 to Asn-67 are disordered. Position 5 is a phosphoserine (Ser-5). The span at Gly-23 to Ser-36 shows a compositional bias: basic and acidic residues. A Phosphoserine modification is found at Ser-653.

The protein localises to the secreted. Its function is as follows. May play a role in fertility regulation. The sequence is that of Spermatogenesis-associated protein 20 (Spata20) from Mus musculus (Mouse).